A 365-amino-acid chain; its full sequence is Probable caffeine synthase 2 (365 aa).

Tyr19 lines the S-adenosyl-L-homocysteine pocket. A caffeine-binding site is contributed by Thr26. 5 residues coordinate S-adenosyl-L-homocysteine: Cys62, Asp99, Leu100, Ser134, and Phe135. Caffeine contacts are provided by Tyr152, His155, and Trp156. Asn173 contributes to the Mg(2+) binding site. A caffeine-binding site is contributed by Arg221. The Mg(2+) site is built by Asp259, Phe261, and Asn262. Phe317 serves as a coordination point for caffeine.

It belongs to the methyltransferase superfamily. Type-7 methyltransferase family. Requires Mg(2+) as cofactor.

The catalysed reaction is 7-methylxanthine + S-adenosyl-L-methionine = theobromine + S-adenosyl-L-homocysteine + H(+). The enzyme catalyses theobromine + S-adenosyl-L-methionine = caffeine + S-adenosyl-L-homocysteine + H(+). It catalyses the reaction 1,7-dimethylxanthine + S-adenosyl-L-methionine = caffeine + S-adenosyl-L-homocysteine + H(+). It participates in alkaloid biosynthesis. In terms of biological role, may be involved in the biosynthesis of caffeine. Catalyzes the conversion of 7-methylxanthine (7mX) to theobromine and of theobromine to caffeine. Has 1-N-methylation activity. This Camellia sinensis (Tea plant) protein is Probable caffeine synthase 2.